Here is a 442-residue protein sequence, read N- to C-terminus: MDDDDFGGFEAAETFDGEQGGNQAVSPAVPWATFPAVSGVRLSPASPELILDHDRSSPSSGHLRSDAVISSPDDTRADSSLVNQTISKVQLQQSAHTHLNIPLFPLGLTDESNHGALALEDEPEGPGVHVSNSQLRQKISSLETKLKASEEEKQRIKKDVESLMEKHSVLEKDFLKEKEQDAVSFQARYRELQEKHKQELEDMRKAGHEALSIIVDEYKALLQSSVKQQLDAIEKQYVSAIEKQAHRCEELLHAQHQRLLEVLDTEKELLKEKIQEALTQQSQEQKETLGKCLQEEMQKNKETLESAVKLEKEAMKDVITKAVEEERENLEKVHAEEREMWKTEHARDQERVAEAIQAAVQEQQRMSQEAVKAAIAEEQRRSEKAMEEAVKRTRDELVEYVREQRRLDQVTRQRSLSSLELFLSCAQKQLSALIATEPVDIE.

A GGA1-binding motif region spans residues 1 to 16 (MDDDDFGGFEAAETFD). The tract at residues 1 to 27 (MDDDDFGGFEAAETFDGEQGGNQAVSP) is disordered. 2 positions are modified to phosphoserine: serine 43 and serine 46. The tract at residues 48–79 (ELILDHDRSSPSSGHLRSDAVISSPDDTRADS) is disordered. Coiled coils occupy residues 127-213 (GVHV…ALSI) and 248-409 (CEEL…RLDQ). The segment at 211–414 (LSIIVDEYKA…RRLDQVTRQR (204 aa)) is homodimerization.

As to quaternary structure, homodimer. Interacts with GGA1, GGA2 and AP1G1.

It is found in the membrane. The protein localises to the golgi apparatus. Its subcellular location is the trans-Golgi network membrane. It localises to the trans-Golgi network. Involved in the regulation of membrane traffic through the trans-Golgi network (TGN). Functions in close cooperation with the GGAs in the sorting of hydrolases to lysosomes. This is Coiled-coil domain-containing protein 91 (Ccdc91) from Rattus norvegicus (Rat).